A 1500-amino-acid polypeptide reads, in one-letter code: Host cell factor (1500 aa).

5 Kelch repeats span residues 85–133 (LMVV…VEGT), 135–181 (MFVF…RLGH), 189–237 (KIFL…TYGD), 259–307 (NLLI…MIGN), and 308–373 (KMYV…GIQS). The residue at position 477 (Ser-477) is a Phosphoserine. Positions 517–528 (LLQSMSQPSSPA) are enriched in polar residues. A disordered region spans residues 517-543 (LLQSMSQPSSPASRADKDPLSSGGGTT). Phosphoserine is present on residues Ser-958 and Ser-966. The tract at residues 1024–1061 (SEGQHGSEENENNGENATSSSASALFTGGDTAGPSRAQ) is disordered. Residues 1036–1047 (NGENATSSSASA) show a composition bias toward low complexity. The residue at position 1126 (Thr-1126) is a Phosphothreonine. The tract at residues 1161–1185 (IGSLKENQDENKKFKQRQESSPSQN) is disordered. Residues 1166–1178 (ENQDENKKFKQRQ) show a composition bias toward basic and acidic residues. Fibronectin type-III domains follow at residues 1244–1341 (VQST…TCLP) and 1346–1457 (APSA…DPAA). Residues 1458–1500 (AKQHTPTVTPNLKRGPEKSTIGSSNIANTFCSPHKRGRNGLHD) form a disordered region. The Bipartite nuclear localization signal signature appears at 1470–1495 (KRGPEKSTIGSSNIANTFCSPHKRGR). The segment covering 1477 to 1488 (TIGSSNIANTFC) has biased composition (polar residues). Ser-1489 bears the Phosphoserine mark. Residues 1490–1500 (PHKRGRNGLHD) are compositionally biased toward basic residues.

In terms of assembly, core component of several methyltransferase-containing complexes. Component of the SET1 complex, composed at least of the catalytic subunit Set1, wds/WDR5, Wdr82, Rbbp5, ash2, Cfp1/CXXC1, hcf and Dpy-30L1. Component of the MLL3/4 complex composed at least of the catalytic subunit trr, ash2, Rbbp5, Dpy-30L1, wds, hcf, ptip, Pa1, Utx, Lpt and Ncoa6. Component of the Ada2a-containing (ATAC) complex composed of at least Ada2a, Atac1, Hcf, Ada3, Gcn5, Mocs2B, Charac-14, Atac3, Atac2, NC2beta and wds. Post-translationally, proteolytic cleavage occurs between amino acids 900 and 1100 within the non-conserved central region, giving rise to two independent but tightly associated N- and C-terminal subunits.

The protein resides in the nucleus. May be involved in control of the cell cycle. The sequence is that of Host cell factor from Drosophila melanogaster (Fruit fly).